The sequence spans 295 residues: tRNA pseudouridine synthase A (295 aa).

D67 acts as the Nucleophile in catalysis. Y125 is a binding site for substrate.

It belongs to the tRNA pseudouridine synthase TruA family. As to quaternary structure, homodimer.

The catalysed reaction is uridine(38/39/40) in tRNA = pseudouridine(38/39/40) in tRNA. In terms of biological role, formation of pseudouridine at positions 38, 39 and 40 in the anticodon stem and loop of transfer RNAs. The polypeptide is tRNA pseudouridine synthase A (Prochlorococcus marinus (strain MIT 9303)).